Reading from the N-terminus, the 777-residue chain is MAMVTARQFLASAAELGSGRRRCGGGGACDMREDGGVEALMQCQRVSDLLIAASFLSIPLELFYFATCADLSEVKCAVLHFCAFIVLCGATHLLAAFTHAHPHSAPLLRALTAAKVLAAVASSAAAVSLLTFIPKLLRIKVRESLLRDKASRLHRDLGLVRRREEATSRAVRELTGRIRASPPDAHAILRTTALQLADALGLHACAVWMPAAGRPHDLVLVHHLTSRPDDAADLLLEVGDACTVAADDPDVVDVMASKVAKVLGPDSALAMASSVGAAPAGAVAAIRIPILRVSIYDGGGTPEVTEASYAILVLLLPPHDAAGGWSSHDLEIVQVVADQAAVALSHAAVLEESRSMRDRFAEQHRALMQAKHRAAMATRAFSSIQSAMCHAMRRPVHSVVGLVSMLQHPEADTMRPEQRLAVDAIARTSNLLSALMDEVTVNRQHLSVQRKPFSLHALIKEAISVAGCLSHCGGAGFLHQPECALPEWVVGDERRVFHLLLDMVGTLLNRCNTGSGACRLSFSVRICNVGEERYSLDWIPMRPTFSGCNVCVKFKVGIGRSRSCAIERSLPCELPRRSAATTSSQMGHIFSGYFNKIVQMMNGNMWSASDSEGVGESVTLILQFKLQQGHVEASPPYIPHLNGLRVLLADDDAMNRGVTKKILERLGCQVMSAPSGAHCLSLLASAEASFQLVVLDLDDRAVPSAAMDRFEVALRIRELRNSCWLLIVIAVAAGVVATDDGGAVQELCQRAGINGLVQKPVTLPALGAQLCRVLQDN.

The next 3 helical transmembrane spans lie at 49-69 (LLIA…ATCA), 77-97 (AVLH…LAAF), and 113-133 (AAKV…LTFI). The Cu cation site is built by Cys-88 and His-92. One can recognise a GAF domain in the interval 184–344 (DAHAILRTTA…VVADQAAVAL (161 aa)). In terms of domain architecture, Histidine kinase spans 387 to 521 (AMCHAMRRPV…NTGSGACRLS (135 aa)). Position 390 is a phosphohistidine; by autocatalysis (His-390). One can recognise a Response regulatory domain in the interval 645–774 (RVLLADDDAM…ALGAQLCRVL (130 aa)). Position 696 is a 4-aspartylphosphate (Asp-696).

This sequence belongs to the ethylene receptor family. It depends on Cu cation as a cofactor.

The protein localises to the endoplasmic reticulum membrane. It catalyses the reaction ATP + protein L-histidine = ADP + protein N-phospho-L-histidine.. In terms of biological role, ethylene receptor related to bacterial two-component regulators. Acts as a redundant negative regulator of ethylene signaling. The protein is Ethylene receptor 4 (ETR4) of Oryza sativa subsp. japonica (Rice).